A 276-amino-acid chain; its full sequence is U6 snRNA phosphodiesterase 1 (276 aa).

Residues 1–58 form a disordered region; it reads MIVNYSSSSSEEESGSSSSPSGKRQKLDTETSEALDHGSAQRKVCKSSHLTPRLPLPE. H131 serves as the catalytic Proton acceptor. AMP contacts are provided by residues 131–133, Y213, and 215–221; these read HLS and DPSFHIS. UMP-binding positions include Y213 and 217-221; that span reads SFHIS. H219 (proton donor) is an active-site residue.

It belongs to the 2H phosphoesterase superfamily. USB1 family.

It is found in the nucleus. The enzyme catalyses a 3'-end uridylyl-uridine-RNA = a 3'-end 2',3'-cyclophospho-uridine-RNA + uridine. It catalyses the reaction a 3'-end uridylyl-adenosine-RNA = a 3'-end 2',3'-cyclophospho-uridine-RNA + adenosine. In terms of biological role, 3'-5' RNA exonuclease that trims the 3' end of oligo(U) and oligo(A) tracts of the pre-U6 small nuclear RNA (snRNA) molecule, leading to the formation of a mature U6 snRNA 3' end-terminated with a 2',3'-cyclic phosphate. Participates in the U6 snRNA 3' end processing that prevents U6 snRNA degradation. In addition also removes uridines from the 3' end of U6atac snRNA and possibly the vault RNA VTRNA1-1. The sequence is that of U6 snRNA phosphodiesterase 1 from Danio rerio (Zebrafish).